We begin with the raw amino-acid sequence, 485 residues long: NADH-quinone oxidoreductase subunit N (485 aa).

A run of 14 helical transmembrane segments spans residues 8–28 (LIAL…MLGI), 35–55 (FINA…LYFV), 78–98 (GLVI…LVGY), 104–124 (EFYL…SANH), 125–145 (LASL…LVGY), 159–179 (YMLL…LLYA), 203–223 (VLAG…LVPF), 235–255 (PAPV…AVVM), 271–291 (MVLS…AISQ), 297–317 (LLGY…IAVQ), 327–347 (GVYL…VSLM), 374–394 (AVMT…GFIG), 408–427 (WWLT…YYLR), and 449–469 (ALTA…LLGV).

Belongs to the complex I subunit 2 family. In terms of assembly, NDH-1 is composed of 13 different subunits. Subunits NuoA, H, J, K, L, M, N constitute the membrane sector of the complex.

The protein resides in the cell inner membrane. The enzyme catalyses a quinone + NADH + 5 H(+)(in) = a quinol + NAD(+) + 4 H(+)(out). NDH-1 shuttles electrons from NADH, via FMN and iron-sulfur (Fe-S) centers, to quinones in the respiratory chain. The immediate electron acceptor for the enzyme in this species is believed to be ubiquinone. Couples the redox reaction to proton translocation (for every two electrons transferred, four hydrogen ions are translocated across the cytoplasmic membrane), and thus conserves the redox energy in a proton gradient. This Serratia proteamaculans (strain 568) protein is NADH-quinone oxidoreductase subunit N.